Reading from the N-terminus, the 271-residue chain is Imidazole glycerol phosphate synthase subunit HisF (271 aa).

Residues aspartate 12 and aspartate 136 contribute to the active site.

It belongs to the HisA/HisF family. Heterodimer of HisH and HisF.

The protein resides in the cytoplasm. The enzyme catalyses 5-[(5-phospho-1-deoxy-D-ribulos-1-ylimino)methylamino]-1-(5-phospho-beta-D-ribosyl)imidazole-4-carboxamide + L-glutamine = D-erythro-1-(imidazol-4-yl)glycerol 3-phosphate + 5-amino-1-(5-phospho-beta-D-ribosyl)imidazole-4-carboxamide + L-glutamate + H(+). Its pathway is amino-acid biosynthesis; L-histidine biosynthesis; L-histidine from 5-phospho-alpha-D-ribose 1-diphosphate: step 5/9. Its function is as follows. IGPS catalyzes the conversion of PRFAR and glutamine to IGP, AICAR and glutamate. The HisF subunit catalyzes the cyclization activity that produces IGP and AICAR from PRFAR using the ammonia provided by the HisH subunit. The chain is Imidazole glycerol phosphate synthase subunit HisF from Natronomonas pharaonis (strain ATCC 35678 / DSM 2160 / CIP 103997 / JCM 8858 / NBRC 14720 / NCIMB 2260 / Gabara) (Halobacterium pharaonis).